The sequence spans 234 residues: Thrombin-like enzyme contortrixobin (234 aa).

Residues 1–225 form the Peptidase S1 domain; the sequence is VVGGDECNIN…YNDWIQSIIA (225 aa). 6 cysteine pairs are disulfide-bonded: C7-C139, C26-C42, C74-C232, C118-C186, C150-C165, and C176-C201. Residues H41 and D86 each act as charge relay system in the active site. S180 (charge relay system) is an active-site residue.

As to quaternary structure, monomer. In terms of processing, not glycosylated. In terms of tissue distribution, expressed by the venom gland.

The protein localises to the secreted. Its activity is regulated as follows. Strongly inhibited by diisopropylfluorophosphate (DFP) and to a lesser extent by PMSF, benzamidine and 4,6-diamidino-2-phenylindole. Low inhibition by hirudin. Its function is as follows. Thrombin-like snake venom serine protease that cleaves beta chain of fibrinogen (FGB), releasing fibrinopeptide B. Has a coagulant activity activating blood coagulation factors V (F5) and XIII (F13A1). The chain is Thrombin-like enzyme contortrixobin from Agkistrodon contortrix contortrix (Southern copperhead).